A 185-amino-acid chain; its full sequence is Large ribosomal subunit protein uL5 (185 aa).

Belongs to the universal ribosomal protein uL5 family. In terms of assembly, part of the 50S ribosomal subunit; part of the 5S rRNA/L5/L18/L25 subcomplex. Contacts the 5S rRNA and the P site tRNA. Forms a bridge to the 30S subunit in the 70S ribosome.

Its function is as follows. This is one of the proteins that bind and probably mediate the attachment of the 5S RNA into the large ribosomal subunit, where it forms part of the central protuberance. In the 70S ribosome it contacts protein S13 of the 30S subunit (bridge B1b), connecting the 2 subunits; this bridge is implicated in subunit movement. Contacts the P site tRNA; the 5S rRNA and some of its associated proteins might help stabilize positioning of ribosome-bound tRNAs. The chain is Large ribosomal subunit protein uL5 from Nitrobacter winogradskyi (strain ATCC 25391 / DSM 10237 / CIP 104748 / NCIMB 11846 / Nb-255).